Reading from the N-terminus, the 244-residue chain is UPF0280 protein Mhun_0136 (244 aa).

Belongs to the UPF0280 family.

The protein is UPF0280 protein Mhun_0136 of Methanospirillum hungatei JF-1 (strain ATCC 27890 / DSM 864 / NBRC 100397 / JF-1).